The following is a 584-amino-acid chain: Myo-inositol transporter 1 (584 aa).

The Cytoplasmic portion of the chain corresponds to 1–81; it reads MGIHIPYLTS…TSVMITFNQS (81 aa). Thr12 carries the post-translational modification Phosphothreonine. A disordered region spans residues 13–42; that stretch reads SQSNVGDAVGNADSVEFNSEHDSPSKRGKI. Phosphoserine occurs at positions 26, 31, 35, 37, and 46. Positions 30-42 are enriched in basic and acidic residues; sequence NSEHDSPSKRGKI. The helical transmembrane segment at 82-102 threads the bilayer; that stretch reads LSPFIITLTFVASISGFMFGY. The Extracellular portion of the chain corresponds to 103-129; the sequence is DTGYISSALISIGTDLDHKVLTYGEKE. The helical transmembrane segment at 130–150 threads the bilayer; that stretch reads IVTAATSLGALITSIFAGTAA. Residues 151–163 are Cytoplasmic-facing; sequence DIFGRKRCLMGSN. Residues 164–184 form a helical membrane-spanning segment; that stretch reads LMFVIGAILQVSAHTFWQMAV. Residues 185 to 186 lie on the Extracellular side of the membrane; the sequence is GR. A helical membrane pass occupies residues 187 to 207; it reads LIMGFGVGIGSLIAPLFISEI. Residues 208–215 are Cytoplasmic-facing; sequence APKMIRGR. A helical membrane pass occupies residues 216–236; it reads LTVINSLWLTGGQLVAYGCGA. Residues 237–246 lie on the Extracellular side of the membrane; that stretch reads GLNYVNNGWR. Residues 247 to 267 form a helical membrane-spanning segment; that stretch reads ILVGLSLIPTAVQFTCLCFLP. The Cytoplasmic portion of the chain corresponds to 268–349; it reads DTPRYYVMKG…IGCGLQAIQQ (82 aa). Residues 350–370 traverse the membrane as a helical segment; it reads FTGWNSLMYFSGTIFETVGFK. N-linked (GlcNAc...) asparagine glycosylation is present at Asn371. Over 371–376 the chain is Extracellular; the sequence is NSSAVS. The helical transmembrane segment at 377 to 397 threads the bilayer; the sequence is IIVSGTNFIFTLVAFFSIDKI. Topologically, residues 398–400 are cytoplasmic; sequence GRR. The chain crosses the membrane as a helical span at residues 401–421; sequence TILLIGLPGMTMALVVCSIAF. The Extracellular segment spans residues 422-441; the sequence is HFLGIKFDGAVAVVVSSGFS. A helical membrane pass occupies residues 442–462; sequence SWGIVIIVFIIVFAAFYALGI. The Cytoplasmic segment spans residues 463–486; sequence GTVPWQQSELFPQNVRGIGTSYAT. A helical transmembrane segment spans residues 487–507; sequence ATNWAGSLVIASTFLTMLQNI. The Extracellular portion of the chain corresponds to 508-510; it reads TPA. The helical transmembrane segment at 511 to 531 threads the bilayer; sequence GTFAFFAGLSCLSTIFCYFCY. Topologically, residues 532-584 are cytoplasmic; the sequence is PELSGLELEEVQTILKDGFNIKASKALAKKRKQQVARVHELKYEPTQEIIEDI. Lys573 is covalently cross-linked (Glycyl lysine isopeptide (Lys-Gly) (interchain with G-Cter in ubiquitin)).

Belongs to the major facilitator superfamily. Sugar transporter (TC 2.A.1.1) family.

Its subcellular location is the cell membrane. It carries out the reaction myo-inositol(out) + H(+)(out) = myo-inositol(in) + H(+)(in). Functionally, major transporter for myo-inositol. The protein is Myo-inositol transporter 1 (ITR1) of Saccharomyces cerevisiae (strain ATCC 204508 / S288c) (Baker's yeast).